A 191-amino-acid chain; its full sequence is Protein GrpE (191 aa).

This sequence belongs to the GrpE family. In terms of assembly, homodimer.

It localises to the cytoplasm. Functionally, participates actively in the response to hyperosmotic and heat shock by preventing the aggregation of stress-denatured proteins, in association with DnaK and GrpE. It is the nucleotide exchange factor for DnaK and may function as a thermosensor. Unfolded proteins bind initially to DnaJ; upon interaction with the DnaJ-bound protein, DnaK hydrolyzes its bound ATP, resulting in the formation of a stable complex. GrpE releases ADP from DnaK; ATP binding to DnaK triggers the release of the substrate protein, thus completing the reaction cycle. Several rounds of ATP-dependent interactions between DnaJ, DnaK and GrpE are required for fully efficient folding. In Listeria monocytogenes serotype 4b (strain CLIP80459), this protein is Protein GrpE.